Reading from the N-terminus, the 501-residue chain is MSCSATDLAVLLGPNATAAANYICGQLGDVNNKFIDTAFAIDNTYLLFSAYLVFSMQLGFAMLCAGSVRAKNTMNIMLTNVLDAAAGGLFYYLFGYAFAFGSPSNGFIGKHYFGLKDIPTASADYSNFLYQWAFAIAAAGITSGSIAERTQFVAYLIYSSFLTGFVYPVVSHWFWSVDGWASPFRTDGDLLFSTGAIDFAGSGVVHMVGGIAGLWGALIEGPRLGRFDNGGRAIALRGHSASLVVLGTFLLWFGWYGFNPGSFNKILVTYETGTYNGQWSAVGRTAVTTTLAGCTAALTTLFGKRLLSGHWNVTDVCNGLLGGFAAITGGCSVVEPWAAIICGFVAALVLLGCNKLAEKLKYDDPLEAAQLHGGCGAWGLIFTALFAQEKYLNQIYGNKPGRPHGLFMGGGGKLLGAQLIQIIVITGWVSATMGTLFFILKKMKLLRISSEDEMAGMDMTRHGGFAYMYFDDDESHKAIQLRRVEPRSPSPSGANTTPTPV.

Transmembrane regions (helical) follow at residues 8 to 28, 46 to 66, 81 to 101, 128 to 148, 152 to 172, 199 to 219, 243 to 263, 333 to 353, 366 to 386, and 419 to 439; these read LAVL…GQLG, LLFS…LCAG, VLDA…FAFG, FLYQ…SIAE, FVAY…VVSH, FAGS…GALI, LVVL…PGSF, VVEP…LLGC, LEAA…TALF, and LIQI…LFFI. A Phosphothreonine modification is found at Thr-460. Phosphoserine is present on residues Ser-475, Ser-488, Ser-490, and Ser-492.

Belongs to the ammonia transporter channel (TC 1.A.11.2) family. In terms of assembly, self interacts. Interacts with the receptor protein kinases CEPR2, At2g28990 and PAM74. In terms of tissue distribution, highly expressed in roots. Expressed in root tips, root hairs, root epidermis, rhizodermis, cortex and pericycle. Expressed in leaves epidermal and mesophyll cells.

It localises to the cell membrane. Its function is as follows. High affinity ammonium transporter probably involved in ammonium uptake from the soil, long-distance transport to the shoots and re-uptake of apoplastic ammonium that derives from photorespiration in shoots. Contributes with AMT1-3 to the overall ammonium uptake capacity in roots under nitrogen-deficiency conditions. The polypeptide is Ammonium transporter 1 member 1 (AMT1-1) (Arabidopsis thaliana (Mouse-ear cress)).